Reading from the N-terminus, the 515-residue chain is RNA exonuclease NGL2 (515 aa).

Disordered regions lie at residues 1 to 54 (MTQD…SKPI) and 353 to 381 (RDGEEGADDEEGGNIEKYGKDQPESPVPE). Over residues 21–34 (EINKSVKDAKHQTN) the composition is skewed to basic and acidic residues. The span at 40–52 (QHKKKGKKGKKSK) shows a compositional bias: basic residues. Basic and acidic residues predominate over residues 369–381 (KYGKDQPESPVPE).

Belongs to the CCR4/nocturin family.

Its subcellular location is the cytoplasm. The protein localises to the nucleus. Functionally, involved in pre-rRNA processing. Required for the final stage of 3'-end maturation of 5.8S rRNA at site E. This is RNA exonuclease NGL2 (NGL2) from Saccharomyces cerevisiae (strain ATCC 204508 / S288c) (Baker's yeast).